A 368-amino-acid chain; its full sequence is N-succinylamino acid racemase (368 aa).

2-succinylbenzoate-binding positions include S135 and 161–163; that span reads KLK. The active-site Proton donor is the K163. D189 serves as a coordination point for Mg(2+). N191 is a 2-succinylbenzoate binding site. 2 residues coordinate Mg(2+): E214 and D239. K263 (proton acceptor) is an active-site residue. Residue I293 coordinates 2-succinylbenzoate.

It belongs to the mandelate racemase/muconate lactonizing enzyme family. MenC type 2 subfamily. In terms of assembly, homooctamer. A divalent metal cation serves as cofactor.

It catalyses the reaction N-acetyl-D-methionine = N-acetyl-L-methionine. It carries out the reaction (1R,6R)-6-hydroxy-2-succinyl-cyclohexa-2,4-diene-1-carboxylate = 2-succinylbenzoate + H2O. Inhibited by EDTA and sulfhydryl reagents such as p-chloromercuribenzoic acid. Both OSBS and NAAAR activities are inhibited competitively by salicylhydroxamate. Its function is as follows. Acts as a N-succinylamino acid racemase (NSAR) that catalyzes the racemization of N-succinyl-phenylglycine and N-succinyl-methionine. Can catalyze the racemization of a broad range of N-acylamino acids, including N-acetyl-D/L-methionine, N-propionyl-D/L-methionine, N-butyryl-D/L-methionine and N-chloroacetyl-L-valine. Also converts 2-succinyl-6-hydroxy-2,4-cyclohexadiene-1-carboxylate (SHCHC) to 2-succinylbenzoate (OSB). Catalyzes both N-succinylamino acid racemization and OSB synthesis at equivalent rates. NSAR is probably the biological function of this enzyme. The protein is N-succinylamino acid racemase of Amycolatopsis sp.